Here is a 99-residue protein sequence, read N- to C-terminus: Small ribosomal subunit protein bS20 (99 aa).

Residues 1–20 (MASAKPKKKNPRLASGRKRA) are compositionally biased toward basic residues. The interval 1 to 29 (MASAKPKKKNPRLASGRKRARQDVKLNAA) is disordered.

The protein belongs to the bacterial ribosomal protein bS20 family.

Binds directly to 16S ribosomal RNA. The protein is Small ribosomal subunit protein bS20 of Paracidovorax citrulli (strain AAC00-1) (Acidovorax citrulli).